The chain runs to 268 residues: Phosphatidylglycerol--prolipoprotein diacylglyceryl transferase (268 aa).

7 helical membrane-spanning segments follow: residues 23 to 43 (IGLR…RWLA), 62 to 82 (LLFN…VFFY), 97 to 117 (VWEG…AMIW), 132 to 152 (FVAP…FINL), 179 to 199 (SQLY…NIFI), 206 to 226 (ASVA…VEYV), and 241 to 261 (GQAL…WAYS). Arginine 145 lines the a 1,2-diacyl-sn-glycero-3-phospho-(1'-sn-glycerol) pocket.

The protein belongs to the Lgt family.

The protein resides in the cell inner membrane. It catalyses the reaction L-cysteinyl-[prolipoprotein] + a 1,2-diacyl-sn-glycero-3-phospho-(1'-sn-glycerol) = an S-1,2-diacyl-sn-glyceryl-L-cysteinyl-[prolipoprotein] + sn-glycerol 1-phosphate + H(+). It participates in protein modification; lipoprotein biosynthesis (diacylglyceryl transfer). In terms of biological role, catalyzes the transfer of the diacylglyceryl group from phosphatidylglycerol to the sulfhydryl group of the N-terminal cysteine of a prolipoprotein, the first step in the formation of mature lipoproteins. The chain is Phosphatidylglycerol--prolipoprotein diacylglyceryl transferase from Haemophilus influenzae (strain 86-028NP).